The primary structure comprises 57 residues: Large ribosomal subunit protein eL20 (57 aa).

It belongs to the eukaryotic ribosomal protein eL20 family. As to quaternary structure, part of the 50S ribosomal subunit. Binds 23S rRNA.

This chain is Large ribosomal subunit protein eL20, found in Halorhabdus utahensis (strain DSM 12940 / JCM 11049 / AX-2).